The primary structure comprises 923 residues: DNA gyrase subunit A (923 aa).

Positions 34-534 (LPDARDGLKP…SQVDLTIADL (501 aa)) constitute a Topo IIA-type catalytic domain. Tyr122 serves as the catalytic O-(5'-phospho-DNA)-tyrosine intermediate. A GyrA-box motif is present at residues 561 to 567 (QRRGGKG). A disordered region spans residues 881–923 (ERVQEPSGGDDEDLPEGEEAAESLGESAESESEPAAEAEGNEE). 2 stretches are compositionally biased toward acidic residues: residues 888 to 901 (GGDDEDLPEGEEAA) and 908 to 923 (AESESEPAAEAEGNEE).

This sequence belongs to the type II topoisomerase GyrA/ParC subunit family. As to quaternary structure, heterotetramer, composed of two GyrA and two GyrB chains. In the heterotetramer, GyrA contains the active site tyrosine that forms a transient covalent intermediate with DNA, while GyrB binds cofactors and catalyzes ATP hydrolysis.

It localises to the cytoplasm. The enzyme catalyses ATP-dependent breakage, passage and rejoining of double-stranded DNA.. A type II topoisomerase that negatively supercoils closed circular double-stranded (ds) DNA in an ATP-dependent manner to modulate DNA topology and maintain chromosomes in an underwound state. Negative supercoiling favors strand separation, and DNA replication, transcription, recombination and repair, all of which involve strand separation. Also able to catalyze the interconversion of other topological isomers of dsDNA rings, including catenanes and knotted rings. Type II topoisomerases break and join 2 DNA strands simultaneously in an ATP-dependent manner. In Pseudomonas aeruginosa (strain ATCC 15692 / DSM 22644 / CIP 104116 / JCM 14847 / LMG 12228 / 1C / PRS 101 / PAO1), this protein is DNA gyrase subunit A.